We begin with the raw amino-acid sequence, 31 residues long: MVILISYFCFLLVFFLFTLILFIGFNRIRLI.

Residues 3–23 traverse the membrane as a helical segment; sequence ILISYFCFLLVFFLFTLILFI.

Belongs to the PetL family. As to quaternary structure, the 4 large subunits of the cytochrome b6-f complex are cytochrome b6, subunit IV (17 kDa polypeptide, PetD), cytochrome f and the Rieske protein, while the 4 small subunits are PetG, PetL, PetM and PetN. The complex functions as a dimer.

The protein localises to the plastid. It localises to the chloroplast thylakoid membrane. Its function is as follows. Component of the cytochrome b6-f complex, which mediates electron transfer between photosystem II (PSII) and photosystem I (PSI), cyclic electron flow around PSI, and state transitions. PetL is important for photoautotrophic growth as well as for electron transfer efficiency and stability of the cytochrome b6-f complex. This is Cytochrome b6-f complex subunit 6 from Welwitschia mirabilis (Tree tumbo).